Reading from the N-terminus, the 400-residue chain is Formate-dependent phosphoribosylglycinamide formyltransferase (400 aa).

N(1)-(5-phospho-beta-D-ribosyl)glycinamide is bound by residues 21–22 (EL) and Glu-81. Residues Arg-114, Lys-155, 160 to 165 (SSGKGQ), 195 to 198 (EGRI), and Glu-203 each bind ATP. The region spanning 119-313 (RLAAEKLGLP…EFELHVRAIL (195 aa)) is the ATP-grasp domain. Positions 272 and 284 each coordinate Mg(2+). N(1)-(5-phospho-beta-D-ribosyl)glycinamide contacts are provided by residues Asp-291, Lys-360, and 367-368 (RR).

The protein belongs to the PurK/PurT family. Homodimer.

The enzyme catalyses N(1)-(5-phospho-beta-D-ribosyl)glycinamide + formate + ATP = N(2)-formyl-N(1)-(5-phospho-beta-D-ribosyl)glycinamide + ADP + phosphate + H(+). It functions in the pathway purine metabolism; IMP biosynthesis via de novo pathway; N(2)-formyl-N(1)-(5-phospho-D-ribosyl)glycinamide from N(1)-(5-phospho-D-ribosyl)glycinamide (formate route): step 1/1. Functionally, involved in the de novo purine biosynthesis. Catalyzes the transfer of formate to 5-phospho-ribosyl-glycinamide (GAR), producing 5-phospho-ribosyl-N-formylglycinamide (FGAR). Formate is provided by PurU via hydrolysis of 10-formyl-tetrahydrofolate. The chain is Formate-dependent phosphoribosylglycinamide formyltransferase from Methylococcus capsulatus (strain ATCC 33009 / NCIMB 11132 / Bath).